The following is a 556-amino-acid chain: Genetic interactor of prohibitins 3, mitochondrial (556 aa).

Residues 1–21 constitute a mitochondrion transit peptide; it reads MLNLCHALRGVRQFSCSVIVK. Residues 113–305 enclose the CP-type G domain; sequence ESTLNDILNY…LFDLPGYSTS (193 aa).

Belongs to the TRAFAC class YlqF/YawG GTPase family. GEP3 subfamily.

The protein resides in the mitochondrion. In terms of biological role, interacts genetically with prohibitins and thus may be involved in the mitochondrial lipid metabolism. This is Genetic interactor of prohibitins 3, mitochondrial (GEP3) from Saccharomyces cerevisiae (strain ATCC 204508 / S288c) (Baker's yeast).